Consider the following 279-residue polypeptide: Putative colanic acid biosynthesis glycosyl transferase WcaA (279 aa).

To R.meliloti ExoO.

Its pathway is slime biogenesis; slime polysaccharide biosynthesis. The sequence is that of Putative colanic acid biosynthesis glycosyl transferase WcaA (wcaA) from Escherichia coli (strain K12).